A 222-amino-acid chain; its full sequence is Endonuclease V (222 aa).

Asp34 and Asp102 together coordinate Mg(2+).

The protein belongs to the endonuclease V family. Requires Mg(2+) as cofactor.

The protein localises to the cytoplasm. The catalysed reaction is Endonucleolytic cleavage at apurinic or apyrimidinic sites to products with a 5'-phosphate.. Functionally, DNA repair enzyme involved in the repair of deaminated bases. Selectively cleaves double-stranded DNA at the second phosphodiester bond 3' to a deoxyinosine leaving behind the intact lesion on the nicked DNA. This Photorhabdus laumondii subsp. laumondii (strain DSM 15139 / CIP 105565 / TT01) (Photorhabdus luminescens subsp. laumondii) protein is Endonuclease V.